Reading from the N-terminus, the 88-residue chain is Small ribosomal subunit protein bS20 (88 aa).

The segment at 1-27 (MANIPSAKKRARQAEKRRKHNQSQRSM) is disordered. A compositionally biased stretch (basic residues) spans 7-22 (AKKRARQAEKRRKHNQ).

The protein belongs to the bacterial ribosomal protein bS20 family.

In terms of biological role, binds directly to 16S ribosomal RNA. This is Small ribosomal subunit protein bS20 from Alkalilimnicola ehrlichii (strain ATCC BAA-1101 / DSM 17681 / MLHE-1).